We begin with the raw amino-acid sequence, 290 residues long: ATP synthase gamma chain (290 aa).

Belongs to the ATPase gamma chain family. As to quaternary structure, F-type ATPases have 2 components, CF(1) - the catalytic core - and CF(0) - the membrane proton channel. CF(1) has five subunits: alpha(3), beta(3), gamma(1), delta(1), epsilon(1). CF(0) has three main subunits: a, b and c.

Its subcellular location is the cell membrane. Produces ATP from ADP in the presence of a proton gradient across the membrane. The gamma chain is believed to be important in regulating ATPase activity and the flow of protons through the CF(0) complex. This is ATP synthase gamma chain from Buchnera aphidicola subsp. Acyrthosiphon pisum (strain 5A).